A 1284-amino-acid polypeptide reads, in one-letter code: ABC multidrug transporter atrC (1284 aa).

Residues 1–11 show a composition bias toward basic and acidic residues; sequence MKSTAESKETP. The segment at 1 to 24 is disordered; sequence MKSTAESKETPSQDESTTSVPCTE. A run of 6 helical transmembrane segments spans residues 55 to 75, 99 to 119, 178 to 198, 203 to 223, 282 to 302, and 320 to 340; these read AVAILAACASGAGIALQNLIF, AAELALYFVYLGIARLVLSYT, IGLLFQGLAAFVTAFIIAFVV, TLICICIPVATIGTTGVVAAV, LLGLLFSAEYTIIYLGYGLAF, and IFTVLLSVVIASINLTLLAPY. Residues 55–346 form the ABC transmembrane type-1 1 domain; the sequence is AVAILAACAS…LAPYSIEFSR (292 aa). Residues 381-626 form the ABC transporter 1 domain; it reads VELENVTFSY…DGVYAGLVKI (246 aa). Asparagine 385 and asparagine 401 each carry an N-linked (GlcNAc...) asparagine glycan. 416–423 serves as a coordination point for ATP; the sequence is GQSGSGKS. Residues asparagine 488 and asparagine 632 are each glycosylated (N-linked (GlcNAc...) asparagine). The next 2 membrane-spanning stretches (helical) occupy residues 705-725 and 745-765; these read LVVLLGCLGGCAMYPGQAILM and FYASMLIVLAAGCLICYLAVG. The region spanning 705 to 992 is the ABC transmembrane type-1 2 domain; sequence LVVLLGCLGG…LFQWSTSITK (288 aa). An N-linked (GlcNAc...) asparagine glycan is attached at asparagine 800. The next 4 membrane-spanning stretches (helical) occupy residues 824-844, 846-866, 931-951, and 955-975; these read IALVVIAVLQVVTCGILAIAF, WKLGLVVVFGGIPPLVGAGMV, MICFGLTQCIEYWFQALGFWY, and LVSLGETSMYSFFVAFLSVFF. N-linked (GlcNAc...) asparagine glycosylation occurs at asparagine 995. In terms of domain architecture, ABC transporter 2 spans 1027 to 1280; the sequence is IAMDNVRFSY…GGLYRRMCEA (254 aa). 1062-1069 contacts ATP; sequence GSSGCGKS. Residue asparagine 1122 is glycosylated (N-linked (GlcNAc...) asparagine).

It belongs to the ABC transporter superfamily. ABCB family. Multidrug resistance exporter (TC 3.A.1.201) subfamily.

It localises to the cell membrane. Its function is as follows. Pleiotropic ABC efflux transporter involved in the protection of the cells against a wide range of toxic compounds. In Emericella nidulans (strain FGSC A4 / ATCC 38163 / CBS 112.46 / NRRL 194 / M139) (Aspergillus nidulans), this protein is ABC multidrug transporter atrC.